The sequence spans 566 residues: Unconventional myosin-VIIa (566 aa).

One can recognise a Myosin motor domain in the interval 67 to 566; that stretch reads MMEDMIQHLG…AGVVYYESQG (500 aa). 160-167 contacts ATP; it reads GESGAGKT.

It belongs to the TRAFAC class myosin-kinesin ATPase superfamily. Myosin family. As to quaternary structure, might homodimerize in a two headed molecule through the formation of a coiled-coil rod. Identified in a complex with USH1C and USH1G. Interacts with MYRIP. Interacts with RPE65. Interacts with CIB2. May interact with CALM. Interacts with WHRN. Interacts with PLEKHB1 (via PH domain). Interacts with PCDH15. Interacts with TWF2. Interacts with USH1G. Interacts with MYH9. Interacts (via MyTH4-FERM domains) with cytoplasmic regions of ADGRV1 and USH2A. Interacts with PDZD7 (via MyTH4-FERM domains). Interacts with CALML4.

The protein resides in the cytoplasm. Its subcellular location is the cell cortex. The protein localises to the cytoskeleton. It localises to the synapse. Functionally, myosins are actin-based motor molecules with ATPase activity. Unconventional myosins serve in intracellular movements. Their highly divergent tails bind to membranous compartments, which are then moved relative to actin filaments. In the retina, plays an important role in the renewal of the outer photoreceptor disks. Plays an important role in the distribution and migration of retinal pigment epithelial (RPE) melanosomes and phagosomes, and in the regulation of opsin transport in retinal photoreceptors. In the inner ear, plays an important role in differentiation, morphogenesis and organization of cochlear hair cell bundles. Motor protein that is a part of the functional network formed by USH1C, USH1G, CDH23 and MYO7A that mediates mechanotransduction in cochlear hair cells. Required for normal hearing. Involved in hair-cell vesicle trafficking of aminoglycosides, which are known to induce ototoxicity. The sequence is that of Unconventional myosin-VIIa (MYO7A) from Sus scrofa (Pig).